The primary structure comprises 377 residues: Succinyl-diaminopimelate desuccinylase (377 aa).

Zn(2+) is bound at residue histidine 67. The active site involves aspartate 69. Zn(2+) is bound at residue aspartate 100. The active-site Proton acceptor is the glutamate 134. Glutamate 135, glutamate 163, and histidine 349 together coordinate Zn(2+).

This sequence belongs to the peptidase M20A family. DapE subfamily. As to quaternary structure, homodimer. Requires Zn(2+) as cofactor. Co(2+) serves as cofactor.

It carries out the reaction N-succinyl-(2S,6S)-2,6-diaminopimelate + H2O = (2S,6S)-2,6-diaminopimelate + succinate. It participates in amino-acid biosynthesis; L-lysine biosynthesis via DAP pathway; LL-2,6-diaminopimelate from (S)-tetrahydrodipicolinate (succinylase route): step 3/3. Functionally, catalyzes the hydrolysis of N-succinyl-L,L-diaminopimelic acid (SDAP), forming succinate and LL-2,6-diaminopimelate (DAP), an intermediate involved in the bacterial biosynthesis of lysine and meso-diaminopimelic acid, an essential component of bacterial cell walls. The polypeptide is Succinyl-diaminopimelate desuccinylase (Mannheimia succiniciproducens (strain KCTC 0769BP / MBEL55E)).